The primary structure comprises 61 residues: Bacteriocin leucocin-B (61 aa).

A propeptide spanning residues 1–24 (MNNMKSADNYQQLDNNALEQVVGG) is cleaved from the precursor. A disulfide bridge links cysteine 33 with cysteine 38.

Belongs to the bacteriocin class IIA/YGNGV family.

The protein localises to the secreted. Its function is as follows. Active against L.monocytogenes and several lactic acid bacteria. The chain is Bacteriocin leucocin-B from Leuconostoc carnosum.